A 139-amino-acid chain; its full sequence is Protein Turandot B (139 aa).

A signal peptide spans 1-21; sequence MNFNMSMICFALLLIVTLCSA.

Belongs to the Turandot family.

It is found in the secreted. Its function is as follows. A humoral factor that may play a role in stress tolerance. This is Protein Turandot B from Drosophila yakuba (Fruit fly).